A 225-amino-acid polypeptide reads, in one-letter code: Protein-L-isoaspartate O-methyltransferase 2 (225 aa).

Residue S73 is part of the active site.

The protein belongs to the methyltransferase superfamily. L-isoaspartyl/D-aspartyl protein methyltransferase family.

The protein localises to the cytoplasm. It carries out the reaction [protein]-L-isoaspartate + S-adenosyl-L-methionine = [protein]-L-isoaspartate alpha-methyl ester + S-adenosyl-L-homocysteine. In terms of biological role, catalyzes the methyl esterification of L-isoaspartyl residues in peptides and proteins that result from spontaneous decomposition of normal L-aspartyl and L-asparaginyl residues. It plays a role in the repair and/or degradation of damaged proteins. The chain is Protein-L-isoaspartate O-methyltransferase 2 from Pelobacter propionicus (strain DSM 2379 / NBRC 103807 / OttBd1).